A 795-amino-acid chain; its full sequence is Phenylalanine--tRNA ligase beta subunit (795 aa).

One can recognise a tRNA-binding domain in the interval Ala-39–Arg-148. Positions Pro-401–Asn-476 constitute a B5 domain. Mg(2+) contacts are provided by Asp-454, Asp-460, Glu-463, and Glu-464. In terms of domain architecture, FDX-ACB spans Ser-701–Arg-794.

The protein belongs to the phenylalanyl-tRNA synthetase beta subunit family. Type 1 subfamily. As to quaternary structure, tetramer of two alpha and two beta subunits. Mg(2+) is required as a cofactor.

It localises to the cytoplasm. The enzyme catalyses tRNA(Phe) + L-phenylalanine + ATP = L-phenylalanyl-tRNA(Phe) + AMP + diphosphate + H(+). The polypeptide is Phenylalanine--tRNA ligase beta subunit (pheT) (Vibrio cholerae serotype O1 (strain ATCC 39315 / El Tor Inaba N16961)).